A 563-amino-acid polypeptide reads, in one-letter code: MNTKELIASELSSIIDSLDQEAILKLLETPKNSEMGDIAFPAFSLAKVERKAPQMIAAELAEKMNSQAFEKVVATGPYVNFFLDKSAISAQVLQAVTTEKEHYADQNIGKQENVVIDMSSPNIAKPFSIGHLRSTVIGDSLSHIFQKIGYQTVKVNHLGDWGKQFGMLIVAYKKWGDEEAVKAHPIDELLKLYVRINAEAENDPSLDEEAREWFRKLENGDEEALALWQWFRDESLVEFNRLYNELKVEFDSYNGEAFYNDKMDAVVDILSEKGLLLESEGAQVVNLEKYGIEHPALIKKSDGATLYITRDLAAALYRKNEYQFAKSIYVVGQEQSAHFKQLKAVLQEMGYDWSDDITHVPFGLVTKEGKKLSTRKGNVILLEPTVAEAVSRAKVQIEAKNPELENKDQVAHAVGVGAIKFYDLKTDRTNGYDFDLEAMVSFEGETGPYVQYAYARIQSILRKADFKPETAGNYSLNDTESWEIIKLIQDFPRIINRAADNFEPSIIAKFAISLAQSFNKYYAHTRILDESPERDSRLALSYATAVVLKEALRLLGVEAPEKM.

Residues 121 to 131 carry the 'HIGH' region motif; it reads PNIAKPFSIGH.

The protein belongs to the class-I aminoacyl-tRNA synthetase family. As to quaternary structure, monomer.

The protein localises to the cytoplasm. It carries out the reaction tRNA(Arg) + L-arginine + ATP = L-arginyl-tRNA(Arg) + AMP + diphosphate. This Streptococcus pneumoniae (strain ATCC BAA-255 / R6) protein is Arginine--tRNA ligase.